We begin with the raw amino-acid sequence, 106 residues long: Large ribosomal subunit protein bL21 (106 aa).

It belongs to the bacterial ribosomal protein bL21 family. Part of the 50S ribosomal subunit. Contacts protein L20.

Its function is as follows. This protein binds to 23S rRNA in the presence of protein L20. This Chlamydia caviae (strain ATCC VR-813 / DSM 19441 / 03DC25 / GPIC) (Chlamydophila caviae) protein is Large ribosomal subunit protein bL21.